Reading from the N-terminus, the 691-residue chain is Gex-3-interacting protein 13 (691 aa).

2 disordered regions span residues 18-97 and 171-195; these read TASL…SAHL and PASP…KRQR. Low complexity predominate over residues 31 to 46; the sequence is SSFTTTSESTSPPYSS. A compositionally biased stretch (basic and acidic residues) spans 47 to 57; the sequence is SEHHSPTDQRT. Positions 58-79 are enriched in polar residues; sequence ETPTSDSGNASFSPENVATSFE. The span at 171-183 shows a compositional bias: low complexity; that stretch reads PASPCTTAASAPS. 2 consecutive BED-type zinc fingers follow at residues 194 to 242 and 424 to 473; these read QRRN…YEKV and LRRH…YEKV. Positions 212, 215, 230, 235, 443, 446, 461, and 466 each coordinate Zn(2+).

In terms of assembly, interacts with gex-3.

The protein is Gex-3-interacting protein 13 (gei-13) of Caenorhabditis elegans.